A 293-amino-acid chain; its full sequence is ATP synthase gamma chain (293 aa).

Belongs to the ATPase gamma chain family. F-type ATPases have 2 components, CF(1) - the catalytic core - and CF(0) - the membrane proton channel. CF(1) has five subunits: alpha(3), beta(3), gamma(1), delta(1), epsilon(1). CF(0) has three main subunits: a, b and c.

It is found in the cell membrane. Its function is as follows. Produces ATP from ADP in the presence of a proton gradient across the membrane. The gamma chain is believed to be important in regulating ATPase activity and the flow of protons through the CF(0) complex. The polypeptide is ATP synthase gamma chain (Streptococcus sanguinis).